The chain runs to 227 residues: 2,3-bisphosphoglycerate-dependent phosphoglycerate mutase (227 aa).

Residues 8-15, 21-22, R58, 110-113, K121, 137-138, and 181-182 contribute to the substrate site; these read RHGKSVWN, TG, ERMY, RR, and GN. H9 acts as the Tele-phosphohistidine intermediate in catalysis. E110 (proton donor/acceptor) is an active-site residue.

It belongs to the phosphoglycerate mutase family. BPG-dependent PGAM subfamily.

The catalysed reaction is (2R)-2-phosphoglycerate = (2R)-3-phosphoglycerate. It functions in the pathway carbohydrate degradation; glycolysis; pyruvate from D-glyceraldehyde 3-phosphate: step 3/5. Its function is as follows. Catalyzes the interconversion of 2-phosphoglycerate and 3-phosphoglycerate. The protein is 2,3-bisphosphoglycerate-dependent phosphoglycerate mutase of Chlamydia abortus (strain DSM 27085 / S26/3) (Chlamydophila abortus).